We begin with the raw amino-acid sequence, 81 residues long: Photosystem I iron-sulfur center (81 aa).

2 consecutive 4Fe-4S ferredoxin-type domains span residues 2–31 and 39–68; these read SHAV…MVPW and IASA…VRVY. Residues Cys11, Cys14, Cys17, Cys21, Cys48, Cys51, Cys54, and Cys58 each coordinate [4Fe-4S] cluster.

The eukaryotic PSI reaction center is composed of at least 11 subunits. The cofactor is [4Fe-4S] cluster.

It localises to the plastid. Its subcellular location is the chloroplast thylakoid membrane. The catalysed reaction is reduced [plastocyanin] + hnu + oxidized [2Fe-2S]-[ferredoxin] = oxidized [plastocyanin] + reduced [2Fe-2S]-[ferredoxin]. In terms of biological role, apoprotein for the two 4Fe-4S centers FA and FB of photosystem I (PSI); essential for photochemical activity. FB is the terminal electron acceptor of PSI, donating electrons to ferredoxin. The C-terminus interacts with PsaA/B/D and helps assemble the protein into the PSI complex. Required for binding of PsaD and PsaE to PSI. PSI is a plastocyanin/cytochrome c6-ferredoxin oxidoreductase, converting photonic excitation into a charge separation, which transfers an electron from the donor P700 chlorophyll pair to the spectroscopically characterized acceptors A0, A1, FX, FA and FB in turn. In Ostreococcus tauri, this protein is Photosystem I iron-sulfur center.